The chain runs to 814 residues: Microbial collagenase (814 aa).

Positions 1–21 (MELKILSVAIATTLTSTGVFA) are cleaved as a signal peptide. Positions 22-75 (LSEPVSQVTEQHAHSAHTHGVEFNRVEYQPTATLPIQPSKATRVQSLESLDESS) are excised as a propeptide. Histidine 477 contacts Zn(2+). The active site involves glutamate 478. Histidine 481 contacts Zn(2+). Positions 609–697 (APNAVITANS…VVISALGGND (89 aa)) constitute a PKD domain.

This sequence belongs to the peptidase M9A family. Requires Zn(2+) as cofactor. Post-translationally, proteolytic cleavage might yield three different active forms.

It localises to the secreted. It carries out the reaction Digestion of native collagen in the triple helical region at Xaa-|-Gly bonds. With synthetic peptides, a preference is shown for Gly at P3 and P1', Pro and Ala at P2 and P2', and hydroxyproline, Ala or Arg at P3'.. The sequence is that of Microbial collagenase from Vibrio alginolyticus.